The chain runs to 282 residues: Undecaprenyl-diphosphatase (282 aa).

A run of 8 helical transmembrane segments spans residues 7–29 (VLFAILQGATELFPVSSLGHVVI), 45–65 (FLPFVVMLHVGTATALLLYFW), 89–109 (GLLLRLVVATLPAVLIGFALK), 115–135 (LFASPEIAAAFLIANGAVLII), 153–173 (LTLRDSLVIGLFQCLAFLPGL), 196–216 (FAFLMATPVIAGAAVIEVPHL), 229–249 (TALLAAVVAGVVAYLSTAFLM), and 258–278 (WALGPFAAYCALFGALSLILI).

This sequence belongs to the UppP family.

Its subcellular location is the cell inner membrane. The enzyme catalyses di-trans,octa-cis-undecaprenyl diphosphate + H2O = di-trans,octa-cis-undecaprenyl phosphate + phosphate + H(+). Its function is as follows. Catalyzes the dephosphorylation of undecaprenyl diphosphate (UPP). Confers resistance to bacitracin. This chain is Undecaprenyl-diphosphatase, found in Acidiphilium cryptum (strain JF-5).